Reading from the N-terminus, the 309-residue chain is Taste receptor type 2 member 20 (309 aa).

Residues 1–6 (MMSFLH) lie on the Extracellular side of the membrane. Residues 7 to 27 (IVFSILVVVAFILGNFANGFI) form a helical membrane-spanning segment. Residues 28 to 46 (ALINFIAWVKRQKISSADQ) lie on the Cytoplasmic side of the membrane. A helical membrane pass occupies residues 47–67 (IIAALAVSRVGLLWVILLHWY). The Extracellular segment spans residues 68 to 79 (STVLNPTSSNLK). The chain crosses the membrane as a helical span at residues 80 to 100 (VTIFISNAWAVTNHFSIWLAA). Residues 101–125 (SLSIFYLLKIVNFSRLIFHHLKRKA) are Cytoplasmic-facing. The helical transmembrane segment at 126–146 (KSVVLVIVLGSLFFLVCHLVM) threads the bilayer. Residues 147–178 (KSTYINVWTEEYEGNVTWKIKLRNAMHLSNLT) are Extracellular-facing. Residues asparagine 161 and asparagine 176 are each glycosylated (N-linked (GlcNAc...) asparagine). Residues 179 to 199 (VAMLANLIPFTLTLISFLLLI) form a helical membrane-spanning segment. Topologically, residues 200–229 (YSLCKHLKKMQLHGKGSQDPSTKIHIKALQ) are cytoplasmic. Residues 230-250 (TVTSFLILLAIYFLCLITSFW) form a helical membrane-spanning segment. Topologically, residues 251–259 (NSKMRPKEI) are extracellular. A helical transmembrane segment spans residues 260-280 (VLMLCQAFGIIYPSFHSFILI). Residues 281 to 309 (WGNKTLKQTFLSVLWRVTCWAKGQNQSTP) lie on the Cytoplasmic side of the membrane.

It belongs to the G-protein coupled receptor T2R family.

It is found in the membrane. Receptor that may play a role in the perception of bitterness and is gustducin-linked. May play a role in sensing the chemical composition of the gastrointestinal content. The activity of this receptor may stimulate alpha gustducin, mediate PLC-beta-2 activation and lead to the gating of TRPM5. This Gorilla gorilla gorilla (Western lowland gorilla) protein is Taste receptor type 2 member 20 (TAS2R20).